The chain runs to 882 residues: Ion channel DMI1 (882 aa).

The tract at residues 1–122 is disordered; that stretch reads MAKSNEESSN…PSSSSITKQQ (122 aa). The segment covering 48–62 has biased composition (polar residues); the sequence is TSTTKTDFSEQQWNY. Over residues 78 to 95 the composition is skewed to pro residues; the sequence is PPPPPSKPPVNLIPPHPR. A compositionally biased stretch (low complexity) spans 107-117; the sequence is SSLLPQPSSSS. A run of 4 helical transmembrane segments spans residues 129 to 149, 192 to 212, 255 to 275, and 307 to 327; these read SPIF…SAYL, TIAL…YKYL, LALL…LYAV, and IVSV…LGLV. 2 consecutive RCK N-terminal domains span residues 348–489 and 608–757; these read RNHV…ETVV and PEKI…DKSI. Residues 378-403 adopt a coiled-coil conformation; the sequence is VIVVLAEKEKEEMEMDIAKLEFDFMG.

It belongs to the castor/pollux (TC 1.A.1.23) family. As to quaternary structure, interacts (via c-terminus) with CNGC15A, CNGC15B and CNGC15C (via N-terminus). The Nod factor has no effect on these interactions, implying that the complex is maintained after activation. As to expression, mainly expressed in roots and nodules. Also detected in pods, flowers, leaves, and stems.

Its subcellular location is the nucleus membrane. In terms of biological role, required for early signal transduction events leading to endosymbiosis. Acts early in a signal transduction chain leading from the perception of Nod factor to the activation of calcium spiking. Also involved in mycorrhizal symbiosis. May be involved in the regulation of the calcium channel responsible for calcium spiking by mobilizing another cation, and thereby altering the membrane potential. This chain is Ion channel DMI1, found in Medicago truncatula (Barrel medic).